The chain runs to 280 residues: Four and a half LIM domains protein 1 (280 aa).

At Ser2 the chain carries N-acetylserine. Position 4 is an N6-acetyllysine (Lys4). A C4-type zinc finger spans residues 7-31 (CHYCRDPLQGKKYVQKDGRHCCLKC). LIM zinc-binding domains are found at residues 40–92 (CVEC…CNKC), 101–153 (CKGC…CVTC), 162–212 (CVKC…CVDC), and 221–276 (CAGC…CPDC). A Glycyl lysine isopeptide (Lys-Gly) (interchain with G-Cter in SUMO2) cross-link involves residue Lys86.

The protein localises to the cytoplasm. Functionally, may have an involvement in muscle development or hypertrophy. Isoform 2 binds to RBP-J and plays a negative regulatory role in the RBP-J-mediated transcription in mammalian systems. The protein is Four and a half LIM domains protein 1 (Fhl1) of Rattus norvegicus (Rat).